The sequence spans 257 residues: tRNA (guanine-N(1)-)-methyltransferase (257 aa).

Residues Gly-117 and 137 to 142 (LGDFVL) contribute to the S-adenosyl-L-methionine site.

This sequence belongs to the RNA methyltransferase TrmD family. Homodimer.

Its subcellular location is the cytoplasm. The catalysed reaction is guanosine(37) in tRNA + S-adenosyl-L-methionine = N(1)-methylguanosine(37) in tRNA + S-adenosyl-L-homocysteine + H(+). Its function is as follows. Specifically methylates guanosine-37 in various tRNAs. This Bordetella pertussis (strain Tohama I / ATCC BAA-589 / NCTC 13251) protein is tRNA (guanine-N(1)-)-methyltransferase.